A 121-amino-acid polypeptide reads, in one-letter code: MSLTKEQILEAVAKMSILDITELISMMEQKFGVSSINTIVPTSSPAETVEEKTEFDVVLTNIGANKIAVIKAVRGVISLGLKEAKDLVESAPITLKESISKDEAAALKKILEDAGASVEIK.

This sequence belongs to the bacterial ribosomal protein bL12 family. As to quaternary structure, homodimer. Part of the ribosomal stalk of the 50S ribosomal subunit. Forms a multimeric L10(L12)X complex, where L10 forms an elongated spine to which 2 to 4 L12 dimers bind in a sequential fashion. Binds GTP-bound translation factors.

In terms of biological role, forms part of the ribosomal stalk which helps the ribosome interact with GTP-bound translation factors. Is thus essential for accurate translation. This is Large ribosomal subunit protein bL12 from Baumannia cicadellinicola subsp. Homalodisca coagulata.